Reading from the N-terminus, the 326-residue chain is Lipoyl synthase (326 aa).

7 residues coordinate [4Fe-4S] cluster: cysteine 74, cysteine 79, cysteine 85, cysteine 100, cysteine 104, cysteine 107, and serine 314. One can recognise a Radical SAM core domain in the interval 85–303 (CFGRGTATFM…EEEAYKMGFS (219 aa)).

It belongs to the radical SAM superfamily. Lipoyl synthase family. Requires [4Fe-4S] cluster as cofactor.

The protein localises to the cytoplasm. It carries out the reaction [[Fe-S] cluster scaffold protein carrying a second [4Fe-4S](2+) cluster] + N(6)-octanoyl-L-lysyl-[protein] + 2 oxidized [2Fe-2S]-[ferredoxin] + 2 S-adenosyl-L-methionine + 4 H(+) = [[Fe-S] cluster scaffold protein] + N(6)-[(R)-dihydrolipoyl]-L-lysyl-[protein] + 4 Fe(3+) + 2 hydrogen sulfide + 2 5'-deoxyadenosine + 2 L-methionine + 2 reduced [2Fe-2S]-[ferredoxin]. Its pathway is protein modification; protein lipoylation via endogenous pathway; protein N(6)-(lipoyl)lysine from octanoyl-[acyl-carrier-protein]: step 2/2. In terms of biological role, catalyzes the radical-mediated insertion of two sulfur atoms into the C-6 and C-8 positions of the octanoyl moiety bound to the lipoyl domains of lipoate-dependent enzymes, thereby converting the octanoylated domains into lipoylated derivatives. In Acidovorax ebreus (strain TPSY) (Diaphorobacter sp. (strain TPSY)), this protein is Lipoyl synthase.